Reading from the N-terminus, the 462-residue chain is Argininosuccinate lyase (462 aa).

Belongs to the lyase 1 family. Argininosuccinate lyase subfamily.

The protein resides in the cytoplasm. It carries out the reaction 2-(N(omega)-L-arginino)succinate = fumarate + L-arginine. It participates in amino-acid biosynthesis; L-arginine biosynthesis; L-arginine from L-ornithine and carbamoyl phosphate: step 3/3. The protein is Argininosuccinate lyase of Rippkaea orientalis (strain PCC 8801 / RF-1) (Cyanothece sp. (strain PCC 8801)).